We begin with the raw amino-acid sequence, 248 residues long: Phosphoribosylaminoimidazole-succinocarboxamide synthase (248 aa).

Belongs to the SAICAR synthetase family.

It catalyses the reaction 5-amino-1-(5-phospho-D-ribosyl)imidazole-4-carboxylate + L-aspartate + ATP = (2S)-2-[5-amino-1-(5-phospho-beta-D-ribosyl)imidazole-4-carboxamido]succinate + ADP + phosphate + 2 H(+). Its pathway is purine metabolism; IMP biosynthesis via de novo pathway; 5-amino-1-(5-phospho-D-ribosyl)imidazole-4-carboxamide from 5-amino-1-(5-phospho-D-ribosyl)imidazole-4-carboxylate: step 1/2. In Methanothermobacter thermautotrophicus (strain ATCC 29096 / DSM 1053 / JCM 10044 / NBRC 100330 / Delta H) (Methanobacterium thermoautotrophicum), this protein is Phosphoribosylaminoimidazole-succinocarboxamide synthase (purC).